Reading from the N-terminus, the 346-residue chain is Phosphoribosylformylglycinamidine cyclo-ligase (346 aa).

It belongs to the AIR synthase family.

Its subcellular location is the cytoplasm. The catalysed reaction is 2-formamido-N(1)-(5-O-phospho-beta-D-ribosyl)acetamidine + ATP = 5-amino-1-(5-phospho-beta-D-ribosyl)imidazole + ADP + phosphate + H(+). It functions in the pathway purine metabolism; IMP biosynthesis via de novo pathway; 5-amino-1-(5-phospho-D-ribosyl)imidazole from N(2)-formyl-N(1)-(5-phospho-D-ribosyl)glycinamide: step 2/2. The sequence is that of Phosphoribosylformylglycinamidine cyclo-ligase from Shewanella halifaxensis (strain HAW-EB4).